A 422-amino-acid polypeptide reads, in one-letter code: Lipase member M (422 aa).

The first 33 residues, 1–33 (MSEILSRVWTVSHRVEIWLLILVAYLLQRNVNS), serve as a signal peptide directing secretion. N-linked (GlcNAc...) asparagine glycosylation occurs at Asn48. Residues 92 to 392 (PVVLLQHGLL…EWAHVDFIWG (301 aa)) form the AB hydrolase-1 domain. Catalysis depends on Ser186, which acts as the Nucleophile. Cys260 and Cys269 are joined by a disulfide. Active-site charge relay system residues include Asp357 and His386.

This sequence belongs to the AB hydrolase superfamily. Lipase family.

Its subcellular location is the secreted. Plays a highly specific role in the last step of keratinocyte differentiation. May have an essential function in lipid metabolism of the most differentiated epidermal layers. In Mus musculus (Mouse), this protein is Lipase member M (Lipm).